The sequence spans 167 residues: MAVNDCFSLTYPHNPHPGDLIEVFRPCYQHWALYLGDGYVINIAPVDGIPSSFSSAKSVFSTKALVKMQLLKDVVGNDTYRINNKYDTTYPPLPVEEVIQRSEFAIGQEVTYDLLVNNCEHFVTLLRYGEGVSEQANRAIGTIGLVAAGIDIFTFLGLFPKRQGAKS.

Residues 1–138 (MAVNDCFSLT…GEGVSEQANR (138 aa)) lie on the Cytoplasmic side of the membrane. An LRAT domain is found at 20-135 (LIEVFRPCYQ…LRYGEGVSEQ (116 aa)). H30 is a catalytic residue. C119 functions as the Acyl-thioester intermediate in the catalytic mechanism. A helical membrane pass occupies residues 139–159 (AIGTIGLVAAGIDIFTFLGLF). The Lumenal portion of the chain corresponds to 160 to 167 (PKRQGAKS).

This sequence belongs to the H-rev107 family.

Its subcellular location is the membrane. The protein resides in the cytoplasm. It is found in the nucleus. The enzyme catalyses a 1,2-diacyl-sn-glycero-3-phosphocholine + H2O = a 1-acyl-sn-glycero-3-phosphocholine + a fatty acid + H(+). The catalysed reaction is a 1,2-diacyl-sn-glycero-3-phosphocholine + H2O = a 2-acyl-sn-glycero-3-phosphocholine + a fatty acid + H(+). It carries out the reaction 1,2-dihexadecanoyl-sn-glycero-3-phosphocholine + H2O = 2-hexadecanoyl-sn-glycero-3-phosphocholine + hexadecanoate + H(+). It catalyses the reaction 1,2-dihexadecanoyl-sn-glycero-3-phosphocholine + H2O = 1-hexadecanoyl-sn-glycero-3-phosphocholine + hexadecanoate + H(+). The enzyme catalyses 1-hexadecanoyl-2-(5Z,8Z,11Z,14Z-eicosatetraenoyl)-sn-glycero-3-phosphoethanolamine + H2O = 2-(5Z,8Z,11Z,14Z)-eicosatetraenoyl-sn-glycero-3-phosphoethanolamine + hexadecanoate + H(+). The catalysed reaction is 1-hexadecanoyl-2-(5Z,8Z,11Z,14Z-eicosatetraenoyl)-sn-glycero-3-phosphoethanolamine + H2O = 1-hexadecanoyl-sn-glycero-3-phosphoethanolamine + (5Z,8Z,11Z,14Z)-eicosatetraenoate + H(+). It carries out the reaction 1,2-di-(9Z-octadecenoyl)-sn-glycero-3-phosphoethanolamine + 1,2-dihexadecanoyl-sn-glycero-3-phosphocholine = hexadecanoyl-sn-glycero-3-phosphocholine + N-hexadecanoyl-1,2-di-(9Z-octadecenoyl)-sn-glycero-3-phosphoethanolamine + H(+). It catalyses the reaction 1,2-dihexadecanoyl-sn-glycero-3-phosphocholine + a 2-acyl-sn-glycero-3-phosphocholine = a 1-hexadecanoyl-2-acyl-sn-glycero-3-phosphocholine + 2-hexadecanoyl-sn-glycero-3-phosphocholine. In terms of biological role, exhibits both phospholipase A1/2 and acyltransferase activities. Shows phospholipase A1 (PLA1) and A2 (PLA2) activity, catalyzing the calcium-independent release of fatty acids from the sn-1 or sn-2 position of glycerophospholipids. Shows O-acyltransferase activity, catalyzing the transfer of a fatty acyl group from glycerophospholipid to the hydroxyl group of lysophospholipid. The polypeptide is Phospholipase A and acyltransferase 1 (Rattus norvegicus (Rat)).